A 550-amino-acid chain; its full sequence is Major fimbrium tip subunit FimE (550 aa).

An N-terminal signal peptide occupies residues 1–21 (MKSKSIIAQLLYVLIAFMAVS). C22 carries N-palmitoyl cysteine lipidation. C22 carries the S-diacylglycerol cysteine lipid modification. The propeptide occupies 22-51 (CVADKSEPCPSGEPTRVSGSIVSLEHHGLR).

This sequence belongs to the FimE family. As to quaternary structure, fimbriae are composed of a major, structural subunit and the minor components FimC, FimD and FimE. Identified in a complex composed of FimC, FimD and FimE (in vitro). Does not directly interact with host proteins, but only as a complex with FimC and FimD.

It is found in the fimbrium. The protein localises to the cell outer membrane. Probably a component of the fimbrium tip; required for incorporation of FimC and FimD into fimbriae. These long, filamentous pili are attached to the cell surface; they mediate biofilm formation, adhesion onto host cells and onto other bacteria that are part of the oral microbiome. They play an important role in invasion of periodontal tissues and are major virulence factors. FimC, FimD and FimE contribute to interaction with host CXCR4 and thereby down-regulate the TLR2-mediated host immune response. This chain is Major fimbrium tip subunit FimE, found in Porphyromonas gingivalis (strain ATCC 33277 / DSM 20709 / CIP 103683 / JCM 12257 / NCTC 11834 / 2561).